The chain runs to 233 residues: Ribonuclease HII (233 aa).

One can recognise an RNase H type-2 domain in the interval 21–211 (KIIAGVDEVG…LDALPQWRHL (191 aa)). D27, E28, and D119 together coordinate a divalent metal cation.

The protein belongs to the RNase HII family. Requires Mn(2+) as cofactor. Mg(2+) serves as cofactor.

Its subcellular location is the cytoplasm. It catalyses the reaction Endonucleolytic cleavage to 5'-phosphomonoester.. Endonuclease that specifically degrades the RNA of RNA-DNA hybrids. This chain is Ribonuclease HII (rnhB), found in Streptomyces coelicolor (strain ATCC BAA-471 / A3(2) / M145).